A 519-amino-acid chain; its full sequence is Aldehyde dehydrogenase X, mitochondrial (519 aa).

Residues 1–19 (MLNARFLVPRLLCLQGRTT) constitute a mitochondrion transit peptide. The residue at position 53 (Lys-53) is an N6-acetyllysine. Lys-54 carries the post-translational modification N6-acetyllysine; alternate. Lys-54 carries the N6-succinyllysine; alternate modification. 264–269 (GSTEVG) contributes to the NAD(+) binding site. The active-site Proton acceptor is Glu-287. The Nucleophile role is filled by Cys-321. N6-acetyllysine; alternate occurs at positions 366, 385, 401, and 428. N6-succinyllysine; alternate occurs at positions 366, 385, 401, and 428. Lys-431 is modified (N6-acetyllysine).

The protein belongs to the aldehyde dehydrogenase family. In terms of assembly, homotetramer.

The protein localises to the mitochondrion matrix. The catalysed reaction is an aldehyde + NAD(+) + H2O = a carboxylate + NADH + 2 H(+). The protein operates within alcohol metabolism; ethanol degradation; acetate from ethanol: step 2/2. In terms of biological role, ALDHs play a major role in the detoxification of alcohol-derived acetaldehyde. They are involved in the metabolism of corticosteroids, biogenic amines, neurotransmitters, and lipid peroxidation. This Rattus norvegicus (Rat) protein is Aldehyde dehydrogenase X, mitochondrial (Aldh1b1).